The following is a 124-amino-acid chain: Small ribosomal subunit protein uS12cz/uS12cy (124 aa).

The protein belongs to the universal ribosomal protein uS12 family. As to quaternary structure, part of the 30S ribosomal subunit.

The protein localises to the plastid. The protein resides in the chloroplast. Functionally, with S4 and S5 plays an important role in translational accuracy. Located at the interface of the 30S and 50S subunits. The chain is Small ribosomal subunit protein uS12cz/uS12cy (rps12-A) from Agrostis stolonifera (Creeping bentgrass).